Here is a 148-residue protein sequence, read N- to C-terminus: Nucleoside diphosphate kinase (148 aa).

ATP is bound by residues Lys10, Phe58, Arg86, Thr92, Arg103, and Asn113. The Pros-phosphohistidine intermediate role is filled by His116.

This sequence belongs to the NDK family. The cofactor is Mg(2+).

The protein resides in the cytoplasm. It carries out the reaction a 2'-deoxyribonucleoside 5'-diphosphate + ATP = a 2'-deoxyribonucleoside 5'-triphosphate + ADP. The catalysed reaction is a ribonucleoside 5'-diphosphate + ATP = a ribonucleoside 5'-triphosphate + ADP. In terms of biological role, major role in the synthesis of nucleoside triphosphates other than ATP. The ATP gamma phosphate is transferred to the NDP beta phosphate via a ping-pong mechanism, using a phosphorylated active-site intermediate. This chain is Nucleoside diphosphate kinase, found in Thermoplasma acidophilum (strain ATCC 25905 / DSM 1728 / JCM 9062 / NBRC 15155 / AMRC-C165).